The sequence spans 384 residues: Carbamoyl phosphate synthase small chain (384 aa).

A CPSase region spans residues 1-189; sequence MSKSALLVLE…GLPEAKDDSE (189 aa). L-glutamine contacts are provided by S47, G241, and G243. The Glutamine amidotransferase type-1 domain occupies 193-380; that stretch reads HVVAYDFGAK…IELIKLSVNE (188 aa). C269 serves as the catalytic Nucleophile. L-glutamine-binding residues include L270, Q273, N311, G313, and F314. Active-site residues include H353 and E355.

This sequence belongs to the CarA family. As to quaternary structure, composed of two chains; the small (or glutamine) chain promotes the hydrolysis of glutamine to ammonia, which is used by the large (or ammonia) chain to synthesize carbamoyl phosphate. Tetramer of heterodimers (alpha,beta)4.

The enzyme catalyses hydrogencarbonate + L-glutamine + 2 ATP + H2O = carbamoyl phosphate + L-glutamate + 2 ADP + phosphate + 2 H(+). It catalyses the reaction L-glutamine + H2O = L-glutamate + NH4(+). The protein operates within amino-acid biosynthesis; L-arginine biosynthesis; carbamoyl phosphate from bicarbonate: step 1/1. Its pathway is pyrimidine metabolism; UMP biosynthesis via de novo pathway; (S)-dihydroorotate from bicarbonate: step 1/3. In terms of biological role, small subunit of the glutamine-dependent carbamoyl phosphate synthetase (CPSase). CPSase catalyzes the formation of carbamoyl phosphate from the ammonia moiety of glutamine, carbonate, and phosphate donated by ATP, constituting the first step of 2 biosynthetic pathways, one leading to arginine and/or urea and the other to pyrimidine nucleotides. The small subunit (glutamine amidotransferase) binds and cleaves glutamine to supply the large subunit with the substrate ammonia. The polypeptide is Carbamoyl phosphate synthase small chain (Photobacterium profundum (strain SS9)).